We begin with the raw amino-acid sequence, 890 residues long: DNA mismatch repair protein MutS (890 aa).

645 to 652 is an ATP binding site; it reads GPNMAGKS.

It belongs to the DNA mismatch repair MutS family.

Functionally, this protein is involved in the repair of mismatches in DNA. It is possible that it carries out the mismatch recognition step. This protein has a weak ATPase activity. This chain is DNA mismatch repair protein MutS, found in Rickettsia africae (strain ESF-5).